Reading from the N-terminus, the 41-residue chain is Large ribosomal subunit protein bL36 (41 aa).

This sequence belongs to the bacterial ribosomal protein bL36 family.

This chain is Large ribosomal subunit protein bL36, found in Rickettsia massiliae (strain Mtu5).